The sequence spans 285 residues: Pantothenate synthetase (285 aa).

An ATP-binding site is contributed by Met-30 to His-37. The active-site Proton donor is the His-37. Gln-61 serves as a coordination point for (R)-pantoate. Residue Gln-61 coordinates beta-alanine. Residue Gly-149 to Asp-152 coordinates ATP. Gln-155 is a (R)-pantoate binding site. ATP contacts are provided by residues Val-178 and Leu-186–Arg-189.

Belongs to the pantothenate synthetase family. As to quaternary structure, homodimer.

It is found in the cytoplasm. It catalyses the reaction (R)-pantoate + beta-alanine + ATP = (R)-pantothenate + AMP + diphosphate + H(+). Its pathway is cofactor biosynthesis; (R)-pantothenate biosynthesis; (R)-pantothenate from (R)-pantoate and beta-alanine: step 1/1. Catalyzes the condensation of pantoate with beta-alanine in an ATP-dependent reaction via a pantoyl-adenylate intermediate. The sequence is that of Pantothenate synthetase from Halorhodospira halophila (strain DSM 244 / SL1) (Ectothiorhodospira halophila (strain DSM 244 / SL1)).